Consider the following 527-residue polypeptide: Peptide chain release factor 3 (527 aa).

The tr-type G domain maps to 9 to 277; sequence AKRRTFAIIS…AVVDWAPKPL (269 aa). GTP is bound by residues 18-25, 86-90, and 140-143; these read SHPDAGKT, DTPGH, and NKLD.

Belongs to the TRAFAC class translation factor GTPase superfamily. Classic translation factor GTPase family. PrfC subfamily.

It is found in the cytoplasm. Increases the formation of ribosomal termination complexes and stimulates activities of RF-1 and RF-2. It binds guanine nucleotides and has strong preference for UGA stop codons. It may interact directly with the ribosome. The stimulation of RF-1 and RF-2 is significantly reduced by GTP and GDP, but not by GMP. This is Peptide chain release factor 3 from Stutzerimonas stutzeri (strain A1501) (Pseudomonas stutzeri).